A 37-amino-acid chain; its full sequence is Large ribosomal subunit protein bL36 (37 aa).

The protein belongs to the bacterial ribosomal protein bL36 family.

The chain is Large ribosomal subunit protein bL36 from Helicobacter pylori (strain HPAG1).